Reading from the N-terminus, the 348-residue chain is Protein RecA (348 aa).

Gly-67–Thr-74 provides a ligand contact to ATP.

The protein belongs to the RecA family.

The protein localises to the cytoplasm. In terms of biological role, can catalyze the hydrolysis of ATP in the presence of single-stranded DNA, the ATP-dependent uptake of single-stranded DNA by duplex DNA, and the ATP-dependent hybridization of homologous single-stranded DNAs. It interacts with LexA causing its activation and leading to its autocatalytic cleavage. This chain is Protein RecA, found in Clostridioides difficile (strain 630) (Peptoclostridium difficile).